The sequence spans 85 residues: Small ribosomal subunit protein bS16c (85 aa).

It belongs to the bacterial ribosomal protein bS16 family.

It is found in the plastid. The protein resides in the chloroplast. The sequence is that of Small ribosomal subunit protein bS16c from Oryza nivara (Indian wild rice).